Reading from the N-terminus, the 243-residue chain is Pyridoxine 5'-phosphate synthase (243 aa).

N7 provides a ligand contact to 3-amino-2-oxopropyl phosphate. A 1-deoxy-D-xylulose 5-phosphate-binding site is contributed by 9-10 (DH). Residue R18 participates in 3-amino-2-oxopropyl phosphate binding. H43 (proton acceptor) is an active-site residue. Residues R45 and H50 each coordinate 1-deoxy-D-xylulose 5-phosphate. E70 serves as the catalytic Proton acceptor. T100 serves as a coordination point for 1-deoxy-D-xylulose 5-phosphate. The Proton donor role is filled by H192. 3-amino-2-oxopropyl phosphate-binding positions include G193 and 215-216 (GF).

This sequence belongs to the PNP synthase family. Homooctamer; tetramer of dimers.

It is found in the cytoplasm. It carries out the reaction 3-amino-2-oxopropyl phosphate + 1-deoxy-D-xylulose 5-phosphate = pyridoxine 5'-phosphate + phosphate + 2 H2O + H(+). The protein operates within cofactor biosynthesis; pyridoxine 5'-phosphate biosynthesis; pyridoxine 5'-phosphate from D-erythrose 4-phosphate: step 5/5. Catalyzes the complicated ring closure reaction between the two acyclic compounds 1-deoxy-D-xylulose-5-phosphate (DXP) and 3-amino-2-oxopropyl phosphate (1-amino-acetone-3-phosphate or AAP) to form pyridoxine 5'-phosphate (PNP) and inorganic phosphate. The protein is Pyridoxine 5'-phosphate synthase of Salinibacter ruber (strain DSM 13855 / M31).